We begin with the raw amino-acid sequence, 87 residues long: Small ribosomal subunit protein uS15c (87 aa).

It belongs to the universal ribosomal protein uS15 family. Part of the 30S ribosomal subunit.

It localises to the plastid. The protein resides in the chloroplast. The polypeptide is Small ribosomal subunit protein uS15c (rps15) (Nymphaea alba (White water-lily)).